We begin with the raw amino-acid sequence, 221 residues long: Ribonuclease 3 (221 aa).

The RNase III domain maps to 1–123 (MERTGHAFAD…LIAVLYLDGG (123 aa)). Glutamate 36 contributes to the Mg(2+) binding site. The active site involves aspartate 40. Positions 109 and 112 each coordinate Mg(2+). Glutamate 112 is an active-site residue. One can recognise a DRBM domain in the interval 148–217 (DAKTELQEWA…AAALLLREGV (70 aa)).

The protein belongs to the ribonuclease III family. In terms of assembly, homodimer. Requires Mg(2+) as cofactor.

It is found in the cytoplasm. It catalyses the reaction Endonucleolytic cleavage to 5'-phosphomonoester.. In terms of biological role, digests double-stranded RNA. Involved in the processing of primary rRNA transcript to yield the immediate precursors to the large and small rRNAs (23S and 16S). Processes some mRNAs, and tRNAs when they are encoded in the rRNA operon. Processes pre-crRNA and tracrRNA of type II CRISPR loci if present in the organism. This Mesorhizobium japonicum (strain LMG 29417 / CECT 9101 / MAFF 303099) (Mesorhizobium loti (strain MAFF 303099)) protein is Ribonuclease 3.